The chain runs to 80 residues: Metallothionein-like protein type 2, MT2-28 (80 aa).

It belongs to the metallothionein superfamily. Type 15 family.

Functionally, metallothioneins have a high content of cysteine residues that bind various heavy metals. This chain is Metallothionein-like protein type 2, MT2-28, found in Brassica juncea (Indian mustard).